The primary structure comprises 189 residues: Small ribosomal subunit protein uS5 (189 aa).

Residues 20–83 form the S5 DRBM domain; sequence FMDRLVHINR…ESAKRSLIRV (64 aa).

The protein belongs to the universal ribosomal protein uS5 family. As to quaternary structure, part of the 30S ribosomal subunit. Contacts proteins S4 and S8.

Its function is as follows. With S4 and S12 plays an important role in translational accuracy. Functionally, located at the back of the 30S subunit body where it stabilizes the conformation of the head with respect to the body. This Methylocella silvestris (strain DSM 15510 / CIP 108128 / LMG 27833 / NCIMB 13906 / BL2) protein is Small ribosomal subunit protein uS5.